The following is an 85-amino-acid chain: Type 3 secretion system needle filament protein (85 aa).

Residues 13-41 (LDTVANALKEQANAANKDVNDAIKALQGT) are a coiled coil.

As to quaternary structure, the core secretion machinery of the T3SS is composed of approximately 20 different proteins, including cytoplasmic components, a base, an export apparatus and a needle. This subunit polymerizes and forms the helical needle filament. Forms a stable heterotrimeric complex with PscE and PscG in the cytoplasm, blocking it in a monomeric state and preventing its polymerization.

The protein resides in the secreted. It is found in the cell surface. Functionally, component of the type III secretion system (T3SS), also called injectisome, which is used to inject bacterial effector proteins into eukaryotic host cells, facilitating the establishment and dissemination of infection. PscF/SctF forms the external needle filament that protrudes from the bacterial surface. The sequence is that of Type 3 secretion system needle filament protein from Pseudomonas aeruginosa (strain ATCC 15692 / DSM 22644 / CIP 104116 / JCM 14847 / LMG 12228 / 1C / PRS 101 / PAO1).